The primary structure comprises 467 residues: MTKIASIADVLQGEIAVGEKVTVRGWVRTRRDSKAGLSFLTVYDGSCFNPIQAIINNDIVNYESEVLRLTAGCSVIVTGTVVESPAQGQAVELQTETVEVVGWVEDPDTYPMAAKRHSIEYLREVAHLRPRTNIIGAVARVRHCLAQAIHRFFHEQGFYWVATPLITASDTEGAGEMFRVSTLDLENLPRTQAGTVDFNQDFFGKEAFLTVSGQLNGETYACALSKIYTFGPTFRAENSNTTRHLAEFWMVEPEIAFATLADNAKLAEDMLKYVFNAVLTERRDDLEFFSKHVDKDVITRLEHFVNSPFAQIDYTDAIDVLVKSGKKFEFPVSWGIDLSSEHERYLAEEHFKSPVVVKNYPKGIKAFYMRLNDDGKTVAAMDVLAPGIGEIIGGSQREERLDVLDKRMVEMGLKPEDYWWYRDLRKYGTVPHSGFGLGFERLIVYVTGVQNIRDVIPFPRSPRNANF.

It belongs to the class-II aminoacyl-tRNA synthetase family. In terms of assembly, homodimer.

The protein localises to the cytoplasm. It carries out the reaction tRNA(Asn) + L-asparagine + ATP = L-asparaginyl-tRNA(Asn) + AMP + diphosphate + H(+). This is Asparagine--tRNA ligase from Actinobacillus succinogenes (strain ATCC 55618 / DSM 22257 / CCUG 43843 / 130Z).